We begin with the raw amino-acid sequence, 68 residues long: UPF0434 protein BURPS668_0926 (68 aa).

Belongs to the UPF0434 family.

This Burkholderia pseudomallei (strain 668) protein is UPF0434 protein BURPS668_0926.